We begin with the raw amino-acid sequence, 439 residues long: Xylose isomerase (439 aa).

Active-site residues include H99 and D102. Residues E230, E266, H269, D294, D305, D307, and D337 each contribute to the Mg(2+) site.

It belongs to the xylose isomerase family. As to quaternary structure, homotetramer. Mg(2+) serves as cofactor.

Its subcellular location is the cytoplasm. The catalysed reaction is alpha-D-xylose = alpha-D-xylulofuranose. The chain is Xylose isomerase from Shouchella clausii (strain KSM-K16) (Alkalihalobacillus clausii).